A 181-amino-acid chain; its full sequence is Translation machinery-associated protein 20 (181 aa).

An N-acetylmethionine modification is found at Met-1. One can recognise a PUA domain in the interval 90 to 172 (YPTVQVDRGA…HSIELIHHLG (83 aa)).

It belongs to the TMA20 family. Interacts with TMA22. Associates with ribosomal complexes.

It is found in the cytoplasm. Its function is as follows. Involved in translation. In Saccharomyces cerevisiae (strain ATCC 204508 / S288c) (Baker's yeast), this protein is Translation machinery-associated protein 20 (TMA20).